Reading from the N-terminus, the 358-residue chain is Methylthioribose-1-phosphate isomerase (358 aa).

Substrate-binding positions include 54–56 (RGA), arginine 96, and glutamine 205. Catalysis depends on aspartate 246, which acts as the Proton donor. A substrate-binding site is contributed by 256–257 (NK).

Belongs to the eIF-2B alpha/beta/delta subunits family. MtnA subfamily.

It catalyses the reaction 5-(methylsulfanyl)-alpha-D-ribose 1-phosphate = 5-(methylsulfanyl)-D-ribulose 1-phosphate. It functions in the pathway amino-acid biosynthesis; L-methionine biosynthesis via salvage pathway; L-methionine from S-methyl-5-thio-alpha-D-ribose 1-phosphate: step 1/6. Functionally, catalyzes the interconversion of methylthioribose-1-phosphate (MTR-1-P) into methylthioribulose-1-phosphate (MTRu-1-P). The polypeptide is Methylthioribose-1-phosphate isomerase (Ectopseudomonas mendocina (strain ymp) (Pseudomonas mendocina)).